We begin with the raw amino-acid sequence, 193 residues long: MGYETKSTLDTERSTAPGTGTTTKSCSMTQVVLRFVLFAATLTSIVVMVTSKQTKNIFLPGTPIRIPAAEFTNSPALIYFVVALSVACFYSIVSTFVTVSAFKKHSCSAVLLLNLAIMDAVMVGIVASATGAGGGVAYLGLKGNKEVRWGKICHIYDKFCRHVGGAIAVSLFASVVLLLLSIISVLSLYKKIR.

The tract at residues 1–24 (MGYETKSTLDTERSTAPGTGTTTK) is disordered. Residues 1 to 30 (MGYETKSTLDTERSTAPGTGTTTKSCSMTQ) lie on the Cytoplasmic side of the membrane. Residues 14–24 (STAPGTGTTTK) are compositionally biased toward polar residues. A helical membrane pass occupies residues 31-51 (VVLRFVLFAATLTSIVVMVTS). Topologically, residues 52–76 (KQTKNIFLPGTPIRIPAAEFTNSPA) are extracellular. Residues 77-97 (LIYFVVALSVACFYSIVSTFV) traverse the membrane as a helical segment. Topologically, residues 98-108 (TVSAFKKHSCS) are cytoplasmic. A helical membrane pass occupies residues 109 to 129 (AVLLLNLAIMDAVMVGIVASA). At 130 to 162 (TGAGGGVAYLGLKGNKEVRWGKICHIYDKFCRH) the chain is on the extracellular side. Residues 163–183 (VGGAIAVSLFASVVLLLLSII) form a helical membrane-spanning segment. At 184–193 (SVLSLYKKIR) the chain is on the cytoplasmic side.

Belongs to the Casparian strip membrane proteins (CASP) family. In terms of assembly, homodimer and heterodimers.

It is found in the cell membrane. The sequence is that of CASP-like protein 1D1 from Arabidopsis thaliana (Mouse-ear cress).